The primary structure comprises 147 residues: uncharacterized protein (147 aa).

This is an uncharacterized protein from Acidianus filamentous virus 2 (isolate Italy/Pozzuoli) (AFV-2).